The sequence spans 612 residues: Dihydroxy-acid dehydratase (612 aa).

Aspartate 81 is a Mg(2+) binding site. Cysteine 122 is a binding site for [2Fe-2S] cluster. Residues aspartate 123 and lysine 124 each contribute to the Mg(2+) site. Lysine 124 is subject to N6-carboxylysine. Position 193 (cysteine 193) interacts with [2Fe-2S] cluster. Glutamate 489 is a binding site for Mg(2+). Serine 515 serves as the catalytic Proton acceptor.

The protein belongs to the IlvD/Edd family. As to quaternary structure, homodimer. The cofactor is [2Fe-2S] cluster. Mg(2+) serves as cofactor.

The catalysed reaction is (2R)-2,3-dihydroxy-3-methylbutanoate = 3-methyl-2-oxobutanoate + H2O. It catalyses the reaction (2R,3R)-2,3-dihydroxy-3-methylpentanoate = (S)-3-methyl-2-oxopentanoate + H2O. It functions in the pathway amino-acid biosynthesis; L-isoleucine biosynthesis; L-isoleucine from 2-oxobutanoate: step 3/4. The protein operates within amino-acid biosynthesis; L-valine biosynthesis; L-valine from pyruvate: step 3/4. Its function is as follows. Functions in the biosynthesis of branched-chain amino acids. Catalyzes the dehydration of (2R,3R)-2,3-dihydroxy-3-methylpentanoate (2,3-dihydroxy-3-methylvalerate) into 2-oxo-3-methylpentanoate (2-oxo-3-methylvalerate) and of (2R)-2,3-dihydroxy-3-methylbutanoate (2,3-dihydroxyisovalerate) into 2-oxo-3-methylbutanoate (2-oxoisovalerate), the penultimate precursor to L-isoleucine and L-valine, respectively. The protein is Dihydroxy-acid dehydratase of Xanthomonas oryzae pv. oryzae (strain MAFF 311018).